We begin with the raw amino-acid sequence, 492 residues long: Cytochrome P450 monooxygenase rdc4 (492 aa).

Residue Cys-435 participates in heme binding.

This sequence belongs to the cytochrome P450 family. Requires heme as cofactor.

It functions in the pathway secondary metabolite biosynthesis. Cytochrome P450 monooxygenase; part of the gene cluster that mediates the biosynthesis of radicicol, a resorcylic acid lactone (RAL) that irreversibly inhibits the HSP90 molecular chaperone, an important target for cancer chemotherapy. The radicicol cluster encodes only two apparent post-PKS enzymes, a cytochrome P450 monooxygenase (rdc4) and a non-heme halogenase (rdc2) that could introduce the epoxide and the chlorine, respectively. If this cluster includes all the genes required for radicicol biosynthesis, the remaining structural features of radicicol are presumably generated by the PKSs rdc1 and rdc5. The C-2' ketone could arise if the R-PKS rdc5 and NR-PKS rdc1 each carry out four iterations, in contrast to the five iteration-three iteration split for the hypothemycin PKSs. The origin of the cis 5',6' double bond is not known. The radicicol R-PKS rdc5 ER domain may catalyze either double bond isomerization or reduction in the third iteration. The sequence is that of Cytochrome P450 monooxygenase rdc4 from Metacordyceps chlamydosporia (Nematophagous fungus).